The sequence spans 177 residues: ATP synthase subunit delta (177 aa).

This sequence belongs to the ATPase delta chain family. In terms of assembly, F-type ATPases have 2 components, F(1) - the catalytic core - and F(0) - the membrane proton channel. F(1) has five subunits: alpha(3), beta(3), gamma(1), delta(1), epsilon(1). F(0) has three main subunits: a(1), b(2) and c(10-14). The alpha and beta chains form an alternating ring which encloses part of the gamma chain. F(1) is attached to F(0) by a central stalk formed by the gamma and epsilon chains, while a peripheral stalk is formed by the delta and b chains.

The protein resides in the cell inner membrane. Functionally, f(1)F(0) ATP synthase produces ATP from ADP in the presence of a proton or sodium gradient. F-type ATPases consist of two structural domains, F(1) containing the extramembraneous catalytic core and F(0) containing the membrane proton channel, linked together by a central stalk and a peripheral stalk. During catalysis, ATP synthesis in the catalytic domain of F(1) is coupled via a rotary mechanism of the central stalk subunits to proton translocation. In terms of biological role, this protein is part of the stalk that links CF(0) to CF(1). It either transmits conformational changes from CF(0) to CF(1) or is implicated in proton conduction. This is ATP synthase subunit delta from Shigella boydii serotype 18 (strain CDC 3083-94 / BS512).